A 91-amino-acid chain; its full sequence is MGLARLHAIVEGEVQGVGFRRYVQIHAVRLGLKGYAKNLPDGTVEVVAEGYEESIQQFLNYLWKGPPLALVTKVTHKLESYKGEFTSFDTY.

The Acylphosphatase-like domain maps to 5-91; the sequence is RLHAIVEGEV…KGEFTSFDTY (87 aa). Residues R20 and N38 contribute to the active site.

The protein belongs to the acylphosphatase family.

It catalyses the reaction an acyl phosphate + H2O = a carboxylate + phosphate + H(+). The sequence is that of Acylphosphatase (acyP) from Metallosphaera sedula (strain ATCC 51363 / DSM 5348 / JCM 9185 / NBRC 15509 / TH2).